A 476-amino-acid polypeptide reads, in one-letter code: Membrane-bound lytic murein transglycosylase F (476 aa).

The first 16 residues, 1 to 16 (MIKTLFIILLCGILSA), serve as a signal peptide directing secretion. Residues 17–259 (CQPVDIQDVD…HLNEKYFGHV (243 aa)) are non-LT domain. Residues 260–476 (KRFDYVDTRA…VPAKSHVSAQ (217 aa)) are LT domain. Glu-304 is a catalytic residue.

The protein in the N-terminal section; belongs to the bacterial solute-binding protein 3 family. It in the C-terminal section; belongs to the transglycosylase Slt family.

The protein resides in the cell outer membrane. The catalysed reaction is Exolytic cleavage of the (1-&gt;4)-beta-glycosidic linkage between N-acetylmuramic acid (MurNAc) and N-acetylglucosamine (GlcNAc) residues in peptidoglycan, from either the reducing or the non-reducing ends of the peptidoglycan chains, with concomitant formation of a 1,6-anhydrobond in the MurNAc residue.. Functionally, murein-degrading enzyme that degrades murein glycan strands and insoluble, high-molecular weight murein sacculi, with the concomitant formation of a 1,6-anhydromuramoyl product. Lytic transglycosylases (LTs) play an integral role in the metabolism of the peptidoglycan (PG) sacculus. Their lytic action creates space within the PG sacculus to allow for its expansion as well as for the insertion of various structures such as secretion systems and flagella. This chain is Membrane-bound lytic murein transglycosylase F, found in Shewanella frigidimarina (strain NCIMB 400).